Reading from the N-terminus, the 863-residue chain is DNA-directed RNA polymerase subunit beta' (863 aa).

The interval 1 to 83 (MSGEVAQDQP…SKKKETKASQ (83 aa)) is disordered. The span at 23–36 (EIVNSAITVQSSAK) shows a compositional bias: polar residues. Residues cysteine 159, cysteine 161, cysteine 180, and cysteine 183 each contribute to the Zn(2+) site. Mg(2+)-binding residues include aspartate 621, aspartate 623, and aspartate 625.

Belongs to the RNA polymerase beta' chain family. RpoC1 subfamily. In plastids the minimal PEP RNA polymerase catalytic core is composed of four subunits: alpha, beta, beta', and beta''. When a (nuclear-encoded) sigma factor is associated with the core the holoenzyme is formed, which can initiate transcription. It depends on Mg(2+) as a cofactor. Requires Zn(2+) as cofactor.

It localises to the plastid. The protein localises to the chloroplast. The catalysed reaction is RNA(n) + a ribonucleoside 5'-triphosphate = RNA(n+1) + diphosphate. Functionally, DNA-dependent RNA polymerase catalyzes the transcription of DNA into RNA using the four ribonucleoside triphosphates as substrates. This chain is DNA-directed RNA polymerase subunit beta', found in Nephroselmis olivacea (Green alga).